Reading from the N-terminus, the 2566-residue chain is MTGSDSSMCDLEVKSSLSLTSHLHEYQRNPLFHINTTTLTTTTTINNHINTTSTNNYQQQNDTMYDNNNNNVDNDMKVKSSMNDCINDNTINDTHSTTVIHAENENPRRPIPLTNTSNLEGSTSNVGGNSNFQTMSGNTIPFLPISATNDGRYEWPPSMRYSSANTDRFIQGINTNTDNRQEDFRNQLTSNNNNNYNFKSNNTADNEINQTNHHNLPQFANEKLLDSVRSKNFNNTNISNKVECSSPDANMVAAVAFNAVRRWFTNSSTLTNSDNTMKSVWNENMRTGNSGTNSIGFMNQSNILPYASLNSRLQHPLLPPPLVLNSTVGNATTQNSTHNNYGMFMHRGHHSSGYVPNHTAPMLRGGKKRSHSQSSVNELFDISSLTRSSQGSLNIMQSMRGSHSMGPSAEGSYGHLSAASLGASPGASCDIRRTLSSNGNSSHTAPPAPFSERSPFWSPNSPHSSGSGFDNYQTSSHKSLPLPSTLQTYQQHSGYTSTSGSSGNRSTGCLNRAPFGHLAVLSSSNSLNKQIQQQSDSNSVSNCSIDVPKKLTTNSSNMILPSCRTLGLPTNSVTVSSSEITKNCNNNVLQSAMAFAAVAVAAAAASSTTSSITERENSSLLNKHVLENTLHRECRDHGLHQHPSSECESCSSTLTMGNNNNKLNESINSVYNNLVPSCFMKPPSSATIKSLATTTDNNNSNTNILSNDLSTDNRNKSLNKLPCYNNDADANDTCMDATNNENIQQGVLRKIIPSTPSHFQFSSKTYNQLTQNNSSNKPITAVNNGNDVNNGGNMSSSFTNPLHWPFESIPTPDWSHTWFNNNNNNNTNSTIRFQLNPNETIRRNGRVKIEQIDLNSTVLSKSEMSELLINENSNNNHHHLFGKGNNLLCPTLTKDLLKQHCALNNSDINSITNSLLNQQSSQRKQIDGTLNQMRGIKNFGRTCRITPVLEAITPGITTSISETSAVASSSTTAATPTTTGLFKQKSIEHSHKWQNQNVFSSRRNSTRDPSNNNNSGVGRCSVDEPDVDDDEELDDDGRVPQEGDPDFVETTCRWGDCTLQFDDQDELVKHLSTEHIAGNKKSFVCLWRECVRGTRPFKAQYMLVVHMRRHTGEKPHKCIFEGCIKRYSRLENLKTHLRSHTGEKPYQCEIPGCNKAFSNASDRAKHQNRTHSNEKPYTCKVDGCSKRYTDPSSLRKHVKTVHGAESLMKTSLQKKNSFGVNMLMKVYANKKHKGESWSDRPCGGSGFGGGHLFGNSNNNNSYPSQDKRSNGSMPGIRGRFGPRGMNDNGNIFHRGTYTDREQRPSSSSNPRDSCLACLSNPVHTTTIHPVDINAESIITEYPNQDLSKLKRFSIEESGRNTSHNMNWYLPETDNQNVHSSVLMMASSPAVYNTRNDYFPSFKCEHSIYPNYFSFARNMIHTEDTNQNDNNNNNLVLSWTSPTTPSPCDNLYLDQKINPSITLQPLSTTSNPVQSLSPSIDNPINSTGTKQKNLFSPVNESVTMIRNENCDQSKPVCVYGTSDDLAKDFKKSLKTEENNLIWNWKYSQPSIDGMNKDHCNKKHSILRFDDQDMKKPLPGYLSTSLESRSNTQLALNPNDQTVNQLTRSINNEHFNEMSNMSTTTINETYRENNLQFNFPLKWKVEDPLAYSKNMDNNSQTKNNNELNEENSPQSNQNECISNVPLLNNHYLEDVTEQKSQLCVIECPNRLRSMQDICSSNDIWDSESAAASSGIGSGVTTTTASDNSNPTAQNHHHQKQQPKHSHQHQNRTKSINSDNNYSNQDNVSTMDNDETFFNNENIKSDLGSIDRSSLFGTPRTDSNSTGCSYERTFNPQINYKNDNLIHSSCTCIQKRQKRDNSQSTCSYHRHYHDQLVDGNISSQLDSEQLSATSSQVSSGLGSMTSSNAGSGCNCTGTGLNNTNINVLDNVSGNVSSNICVNTLPRLVEGDNSSNLTNDYPNNSQVFNEDDNNISKMWRKYYKSYGYCSPCNNQPETFYPEVFNSETECYSNTPATVINGLSSTASPVPPSISTYHYHHNPHLHHQHQQRQSQHNLDLVMSNSNHYNDEMHFSPHSYVHSSSSNSSPFNSNRPHSVETFSHNNLTNNSLFDHRRYTHTSLSTTNNNHVNEMNNSINQINPKHPYNICLSSINNNNNQCDTNSNMILKRHSITDDLCHVNGTWFTNEYNGNDNHHYWTHPYNVNQLSIGNQIPNWLNKSVLTSSSPSSSSRLTSTSLTEAIRTHNSSDSLCVTSRFNDSINYYQEYTNCCQPTINSFQINQSSLSSTMSTKTSAKLQSKLSWTTDDNYSEYLCSNHSQNSYIQSNRLVNNNNSSNNDNLIEMDRNNRTNIQRNCSSELNCYTNFQNNTTQLENMDHINTNPLLISLASSQPFLMSSFNTTSISTTSEQTPYSSYHLTPTSNTVHQISQRGIEQMNKMNNLHSNNQLSTIASVTASETTTSTSTVSSYQNLKEREVYNFPVPNPLHTYINPFHSSNSLYSSFLQSVFEEPTFTSSSSSSSPSPSLLLSSSSSTHLGHFNQLFVNADPISNNLVVCNMSTMDTDCAPFHSSN.

3 disordered regions span residues 349-375 (HHSSGYVPNHTAPMLRGGKKRSHSQSS), 430-508 (DIRR…RSTG), and 985-1046 (KSIE…GDPD). Polar residues-rich tracts occupy residues 434 to 444 (TLSSNGNSSHT) and 457 to 492 (WSPNSPHSSGSGFDNYQTSSHKSLPLPSTLQTYQQH). Residues 493-508 (SGYTSTSGSSGNRSTG) show a composition bias toward low complexity. The segment covering 993 to 1016 (WQNQNVFSSRRNSTRDPSNNNNSG) has biased composition (polar residues). Positions 1023 to 1035 (DEPDVDDDEELDD) are enriched in acidic residues. The C2H2-type 1; degenerate zinc finger occupies 1088–1110 (RECVRGTRPFKAQYMLVVHMRRH). 3 consecutive C2H2-type zinc fingers follow at residues 1116–1140 (HKCIFEGCIKRYSRLENLKTHLRSH), 1146–1171 (YQCEIPGCNKAFSNASDRAKHQNRTH), and 1177–1202 (YTCKVDGCSKRYTDPSSLRKHVKTVH). Disordered stretches follow at residues 1254–1313 (GNSN…PRDS), 1465–1491 (LSTTSNPVQSLSPSIDNPINSTGTKQK), 1650–1677 (SKNMDNNSQTKNNNELNEENSPQSNQNE), 1727–1791 (AAAS…MDND), and 2067–2091 (MHFSPHSYVHSSSSNSSPFNSNRPH). Composition is skewed to low complexity over residues 1661–1677 (NNNELNEENSPQSNQNE) and 1727–1743 (AAASSGIGSGVTTTTAS). A compositionally biased stretch (basic residues) spans 1752 to 1769 (NHHHQKQQPKHSHQHQNR). Positions 1770–1791 (TKSINSDNNYSNQDNVSTMDND) are enriched in polar residues. The segment covering 2070 to 2090 (SPHSYVHSSSSNSSPFNSNRP) has biased composition (low complexity).

The protein belongs to the GLI C2H2-type zinc-finger protein family. Expressed in female-paired or unpaired males along the ventral surface in neurons and skin tegument cells. In virgin and mature females, expressed bilaterally along the edges of the body in neurons. In mature females, also expressed in skin tegument cells.

The protein localises to the nucleus. Probable transcription factor which plays an essential role in males to trigger female sexual development by inducing NRPS expression in male. NRPS produces the pheromone beta-alanyl-tryptamine (BATT), which stimulates female sexual development. In Schistosoma mansoni (Blood fluke), this protein is Zinc finger protein GLI1.